The following is a 552-amino-acid chain: Polypeptide N-acetylgalactosaminyltransferase 14 (552 aa).

Residues 1–6 lie on the Cytoplasmic side of the membrane; it reads MRRLTR. Residues 7 to 26 form a helical; Signal-anchor for type II membrane protein membrane-spanning segment; it reads RLVLPVFGVLWITVLLFFWV. Over 27 to 552 the chain is Lumenal; that stretch reads TKRKLEVPTG…MSQHWDMVSS (526 aa). 5 disulfides stabilise this stretch: Cys101/Cys328, Cys319/Cys397, Cys430/Cys449, Cys476/Cys493, and Cys517/Cys538. A catalytic subdomain A region spans residues 110–215; sequence LPPTSIIITF…RDWLQPLLHR (106 aa). Substrate-binding residues include Asp151 and Arg176. Asp199 is a Mn(2+) binding site. Ser200 is a binding site for substrate. His201 provides a ligand contact to Mn(2+). The tract at residues 274–336 is catalytic subdomain B; sequence PIRTPIIAGG…PCSRVGHVFR (63 aa). Trp305 is a binding site for substrate. Residue His333 participates in Mn(2+) binding. Positions 336, 339, and 341 each coordinate substrate. The region spanning 415-550 is the Ricin B-type lectin domain; sequence KESSIQKGNI…SLMSQHWDMV (136 aa).

It belongs to the glycosyltransferase 2 family. GalNAc-T subfamily. Mn(2+) is required as a cofactor. Detected in renal tubules (at protein level). Highly expressed in fetal and adult kidney. Widely expressed at low level. Weakly expressed in whole brain, cerebellum, thymus, lung, mammary gland, liver, stomach, small intestine, colon, pancreas, spleen, bladder, uterus, placenta, testis, ovary, skeletal muscle, leukocyte, B-cell, bone marrow, fetal brain, fetal thymus, fetal lung, fetal liver, fetal small intestine, fetal spleen, fetal skeletal and fetus. Detected in renal tubules (at protein level).

Its subcellular location is the golgi apparatus membrane. The enzyme catalyses L-seryl-[protein] + UDP-N-acetyl-alpha-D-galactosamine = a 3-O-[N-acetyl-alpha-D-galactosaminyl]-L-seryl-[protein] + UDP + H(+). It carries out the reaction L-threonyl-[protein] + UDP-N-acetyl-alpha-D-galactosamine = a 3-O-[N-acetyl-alpha-D-galactosaminyl]-L-threonyl-[protein] + UDP + H(+). It functions in the pathway protein modification; protein glycosylation. In terms of biological role, catalyzes the initial reaction in O-linked oligosaccharide biosynthesis, the transfer of an N-acetyl-D-galactosamine residue to a serine or threonine residue on the protein receptor. Displays activity toward mucin-derived peptide substrates such as Muc2, Muc5AC, Muc7, and Muc13 (-58). May be involved in O-glycosylation in kidney. This chain is Polypeptide N-acetylgalactosaminyltransferase 14 (GALNT14), found in Homo sapiens (Human).